Reading from the N-terminus, the 264-residue chain is 3-deoxy-manno-octulosonate cytidylyltransferase (264 aa).

This sequence belongs to the KdsB family.

The protein localises to the cytoplasm. The catalysed reaction is 3-deoxy-alpha-D-manno-oct-2-ulosonate + CTP = CMP-3-deoxy-beta-D-manno-octulosonate + diphosphate. The protein operates within nucleotide-sugar biosynthesis; CMP-3-deoxy-D-manno-octulosonate biosynthesis; CMP-3-deoxy-D-manno-octulosonate from 3-deoxy-D-manno-octulosonate and CTP: step 1/1. Its pathway is bacterial outer membrane biogenesis; lipopolysaccharide biosynthesis. Activates KDO (a required 8-carbon sugar) for incorporation into bacterial lipopolysaccharide in Gram-negative bacteria. This Methylibium petroleiphilum (strain ATCC BAA-1232 / LMG 22953 / PM1) protein is 3-deoxy-manno-octulosonate cytidylyltransferase.